A 334-amino-acid polypeptide reads, in one-letter code: MTRVLAIETSCDETAAAVVEDGRRALSDVVSTQIDIHRRWGGVVPELASRNHVVQVMPVVDEALTRSGVGPEGLDAVAVTSGPGLVGALLVGVQAAKALALAWGKPLVGVNHLEGHLVAAFLAEVPPAFPYLGLVVSGGHTSLYAAHGFGDYRLLGQTRDDAAGEAFDKGAKLLGLPYPGGVAIDRLAKEGDPAAIRFPKAIVKGADLDFSFSGLKTALLHHVKKHGVPEGPALADLCASYQEAIVRALVEKAFRAARRLQFERLVLAGGVAANSRLRAAATARAAEYEGMSVFIPPVRLCTDNAAMIAVAGTHALLRGERAGPDLNADPAWRL.

Fe cation is bound by residues His-112 and His-116. Residues 135–139, Asp-168, Gly-181, Asp-185, and Asn-274 contribute to the substrate site; that span reads VVSGG. Asp-303 lines the Fe cation pocket.

The protein belongs to the KAE1 / TsaD family. Fe(2+) is required as a cofactor.

The protein resides in the cytoplasm. The enzyme catalyses L-threonylcarbamoyladenylate + adenosine(37) in tRNA = N(6)-L-threonylcarbamoyladenosine(37) in tRNA + AMP + H(+). Required for the formation of a threonylcarbamoyl group on adenosine at position 37 (t(6)A37) in tRNAs that read codons beginning with adenine. Is involved in the transfer of the threonylcarbamoyl moiety of threonylcarbamoyl-AMP (TC-AMP) to the N6 group of A37, together with TsaE and TsaB. TsaD likely plays a direct catalytic role in this reaction. In Anaeromyxobacter dehalogenans (strain 2CP-C), this protein is tRNA N6-adenosine threonylcarbamoyltransferase.